The sequence spans 646 residues: Chaperone protein DnaK (646 aa).

T198 is modified (phosphothreonine; by autocatalysis). Residues E603–K646 form a disordered region. Residues A618–Q627 show a composition bias toward low complexity.

This sequence belongs to the heat shock protein 70 family.

Acts as a chaperone. This chain is Chaperone protein DnaK, found in Acinetobacter baumannii (strain AB307-0294).